A 115-amino-acid polypeptide reads, in one-letter code: Nucleoid-associated protein P9211_00201 (115 aa).

Belongs to the YbaB/EbfC family. As to quaternary structure, homodimer.

Its subcellular location is the cytoplasm. It localises to the nucleoid. Its function is as follows. Binds to DNA and alters its conformation. May be involved in regulation of gene expression, nucleoid organization and DNA protection. The sequence is that of Nucleoid-associated protein P9211_00201 from Prochlorococcus marinus (strain MIT 9211).